We begin with the raw amino-acid sequence, 422 residues long: CinA-like protein (422 aa).

It belongs to the CinA family.

The protein is CinA-like protein of Mycolicibacterium vanbaalenii (strain DSM 7251 / JCM 13017 / BCRC 16820 / KCTC 9966 / NRRL B-24157 / PYR-1) (Mycobacterium vanbaalenii).